The chain runs to 505 residues: Cytochrome P450 9b1 (505 aa).

Heme is bound at residue C449.

Belongs to the cytochrome P450 family. Heme is required as a cofactor.

It localises to the endoplasmic reticulum membrane. It is found in the microsome membrane. In terms of biological role, may be involved in the metabolism of insect hormones and in the breakdown of synthetic insecticides. The protein is Cytochrome P450 9b1 (Cyp9b1) of Drosophila melanogaster (Fruit fly).